The sequence spans 91 residues: Protein transport protein Sec61 subunit beta (91 aa).

The disordered stretch occupies residues 1–45 (MSTSAQVPGGPAAQMKRRNNAQRQEAKASQRPTSTRSVGAGGSSS). The Cytoplasmic portion of the chain corresponds to 1-62 (MSTSAQVPGG…DESQGLKVDP (62 aa)). Polar residues predominate over residues 30–45 (QRPTSTRSVGAGGSSS). The helical transmembrane segment at 63 to 83 (VVVMVLSLGFIFSVVALHILA) threads the bilayer.

This sequence belongs to the SEC61-beta family. Heterotrimeric complex composed of SEC61, SEB1 and SSS1.

It localises to the endoplasmic reticulum membrane. Functionally, necessary for protein translocation in the endoplasmic reticulum. This Yarrowia lipolytica (strain CLIB 122 / E 150) (Yeast) protein is Protein transport protein Sec61 subunit beta (SBH1).